Here is a 337-residue protein sequence, read N- to C-terminus: Glyceraldehyde-3-phosphate dehydrogenase (337 aa).

NAD(+) is bound by residues 12–13 (RI), D34, R78, and T121. D-glyceraldehyde 3-phosphate contacts are provided by residues 151 to 153 (SCT), T182, R199, 212 to 213 (SG), and R235. C152 (nucleophile) is an active-site residue. Residue N317 coordinates NAD(+).

It belongs to the glyceraldehyde-3-phosphate dehydrogenase family. As to quaternary structure, homotetramer.

The protein localises to the cytoplasm. The enzyme catalyses D-glyceraldehyde 3-phosphate + phosphate + NAD(+) = (2R)-3-phospho-glyceroyl phosphate + NADH + H(+). It functions in the pathway carbohydrate degradation; glycolysis; pyruvate from D-glyceraldehyde 3-phosphate: step 1/5. Its function is as follows. Catalyzes the oxidative phosphorylation of glyceraldehyde 3-phosphate (G3P) to 1,3-bisphosphoglycerate (BPG) using the cofactor NAD. The first reaction step involves the formation of a hemiacetal intermediate between G3P and a cysteine residue, and this hemiacetal intermediate is then oxidized to a thioester, with concomitant reduction of NAD to NADH. The reduced NADH is then exchanged with the second NAD, and the thioester is attacked by a nucleophilic inorganic phosphate to produce BPG. This Lactococcus lactis subsp. lactis (strain IL1403) (Streptococcus lactis) protein is Glyceraldehyde-3-phosphate dehydrogenase (gap).